We begin with the raw amino-acid sequence, 325 residues long: 5-dehydro-2-deoxygluconokinase (325 aa).

The protein belongs to the carbohydrate kinase PfkB family.

It carries out the reaction 5-dehydro-2-deoxy-D-gluconate + ATP = 6-phospho-5-dehydro-2-deoxy-D-gluconate + ADP + H(+). The protein operates within polyol metabolism; myo-inositol degradation into acetyl-CoA; acetyl-CoA from myo-inositol: step 5/7. Catalyzes the phosphorylation of 5-dehydro-2-deoxy-D-gluconate (2-deoxy-5-keto-D-gluconate or DKG) to 6-phospho-5-dehydro-2-deoxy-D-gluconate (DKGP). The chain is 5-dehydro-2-deoxygluconokinase from Listeria monocytogenes serovar 1/2a (strain ATCC BAA-679 / EGD-e).